Here is a 213-residue protein sequence, read N- to C-terminus: MFNQSYLNVYFICGTSDVPSHRTIHEVLEAALKAGITLFQFREKGESALKGNDKLVLAKELQHLCHQYDVPFIVNDDVSLAKEINADGIHVGQDDAKVKEIAQYFTDKIIGLSISDLDEYAKSDLTHVDYIGVGPIYPTPSKHDAHIPVGPEMIATFKEMNPQLPIVAIGGINTNNVAPIVEAGANGISVISAISKSENIEKTVNRFKDFFNN.

4-amino-2-methyl-5-(diphosphooxymethyl)pyrimidine-binding positions include 40–44 (QFREK) and Asn-75. Positions 76 and 95 each coordinate Mg(2+). Position 113 (Ser-113) interacts with 4-amino-2-methyl-5-(diphosphooxymethyl)pyrimidine. 139–141 (TPS) lines the 2-[(2R,5Z)-2-carboxy-4-methylthiazol-5(2H)-ylidene]ethyl phosphate pocket. Lys-142 contributes to the 4-amino-2-methyl-5-(diphosphooxymethyl)pyrimidine binding site. 2-[(2R,5Z)-2-carboxy-4-methylthiazol-5(2H)-ylidene]ethyl phosphate-binding positions include Gly-171 and 191 to 192 (IS).

The protein belongs to the thiamine-phosphate synthase family. The cofactor is Mg(2+).

The catalysed reaction is 2-[(2R,5Z)-2-carboxy-4-methylthiazol-5(2H)-ylidene]ethyl phosphate + 4-amino-2-methyl-5-(diphosphooxymethyl)pyrimidine + 2 H(+) = thiamine phosphate + CO2 + diphosphate. The enzyme catalyses 2-(2-carboxy-4-methylthiazol-5-yl)ethyl phosphate + 4-amino-2-methyl-5-(diphosphooxymethyl)pyrimidine + 2 H(+) = thiamine phosphate + CO2 + diphosphate. It carries out the reaction 4-methyl-5-(2-phosphooxyethyl)-thiazole + 4-amino-2-methyl-5-(diphosphooxymethyl)pyrimidine + H(+) = thiamine phosphate + diphosphate. It functions in the pathway cofactor biosynthesis; thiamine diphosphate biosynthesis; thiamine phosphate from 4-amino-2-methyl-5-diphosphomethylpyrimidine and 4-methyl-5-(2-phosphoethyl)-thiazole: step 1/1. Its function is as follows. Condenses 4-methyl-5-(beta-hydroxyethyl)thiazole monophosphate (THZ-P) and 2-methyl-4-amino-5-hydroxymethyl pyrimidine pyrophosphate (HMP-PP) to form thiamine monophosphate (TMP). This Staphylococcus aureus (strain JH1) protein is Thiamine-phosphate synthase.